Reading from the N-terminus, the 171-residue chain is Putative phosphoesterase ABC1741 (171 aa).

The active-site Proton donor is His-34. 2 short sequence motifs (HXTX) span residues 34-37 (HITL) and 116-119 (HITI). The Proton acceptor role is filled by His-116.

The protein belongs to the 2H phosphoesterase superfamily. YjcG family.

In Shouchella clausii (strain KSM-K16) (Alkalihalobacillus clausii), this protein is Putative phosphoesterase ABC1741.